Consider the following 147-residue polypeptide: Cytochrome c' (147 aa).

The first 21 residues, 1 to 21, serve as a signal peptide directing secretion; that stretch reads MKRMMIVAALAALTTTTVAQA. Positions 31, 87, 88, 137, 140, and 141 each coordinate heme c.

In terms of assembly, homodimer. Binds 1 heme c group covalently per subunit.

In terms of biological role, cytochrome c' is the most widely occurring bacterial c-type cytochrome. Cytochromes c' are high-spin proteins and the heme has no sixth ligand. Their exact function is not known. In Rhodospirillum rubrum (strain ATCC 11170 / ATH 1.1.1 / DSM 467 / LMG 4362 / NCIMB 8255 / S1), this protein is Cytochrome c'.